Reading from the N-terminus, the 540-residue chain is Chaperonin GroEL 1 (540 aa).

ATP contacts are provided by residues 29–32 (TLGP), 86–90 (DGTTT), Gly-413, 478–480 (NAA), and Asp-494.

This sequence belongs to the chaperonin (HSP60) family. As to quaternary structure, forms a cylinder of 14 subunits composed of two heptameric rings stacked back-to-back. Interacts with the co-chaperonin GroES.

The protein resides in the cytoplasm. The catalysed reaction is ATP + H2O + a folded polypeptide = ADP + phosphate + an unfolded polypeptide.. In terms of biological role, together with its co-chaperonin GroES, plays an essential role in assisting protein folding. The GroEL-GroES system forms a nano-cage that allows encapsulation of the non-native substrate proteins and provides a physical environment optimized to promote and accelerate protein folding. In Mycobacterium sp. (strain JLS), this protein is Chaperonin GroEL 1.